Reading from the N-terminus, the 73-residue chain is Mauriporin (73 aa).

Residues 1-22 (MNKKTLLVIFFITMLIVDEVNS) form the signal peptide.

This sequence belongs to the non-disulfide-bridged peptide (NDBP) superfamily. Long chain multifunctional peptide (group 2) family. Expressed by the venom gland.

Its subcellular location is the secreted. It is found in the target cell membrane. Amphipathic peptide that displays potent antimicrobial activities against a range of Gram-positive and Gram-negative planktonic bacteria with MIC values in the range 5 uM to 10 uM. In more details, it is active on Listeria ivanovii (MIC=5 uM), Staphylococcus epidermidis (MIC=10 uM), Salmonella enterica (MIC=5 uM), Pseudomonas aeruginosa (ATCC 27853) (MIC=5 uM), Acinetobacter baumannii (MIC=5 uM), Klebsiella pneumoniae (MIC=5 uM), Escherichia coli (MIC=7.5 uM), Salmonella typhimurium (MIC=7.5 uM), Pseudomonas aeruginosa (ATCC 9027) (MIC=10 uM). Is also able to prevent P.aeruginosa biofilm formation while showing weak hemolytic activity towards human erythrocytes. Probably induces bacterial cell death through membrane permeabilization. Moreover, shows DNA-binding activities. Also exerts potent selective cytotoxic and antiproliferative activity against three different prostate cancer cell lines (IC(50)=4.4-7.8 uM), compared to non-tumorigenic cell lines (IC(50)=59.7 uM in Vero and 62.5 uM in HUVEC cells). This peptide possibly exerts its cytotoxic activity through a necrotic mode of cell death. Only shows diminished hemolytic activity against sheep erythrocytes. Does not induce cell death through apoptosis and consequently is not acting upon an intracellular target. This Androctonus mauritanicus (Fat-tailed scorpion) protein is Mauriporin.